A 62-amino-acid polypeptide reads, in one-letter code: ATP synthase subunit K, mitochondrial (62 aa).

The helical transmembrane segment at 14–30 (HHLAIATIGTVVALVAP) threads the bilayer.

In terms of assembly, F-type ATP synthases have 2 components, the catalytic core F(1) and the membrane-embedded component F(0), linked together by a central stalk and a peripheral stalk. The central stalk, also called rotor shaft, is often seen as part of F(1). The peripheral stalk is seen as part of F(0). F(0) contains the membrane channel next to the rotor. F-type ATP synthases form dimers but each monomer functions independently in ATP generation. The dimer consists of 18 different polypeptides: ATP1 (subunit alpha, part of F(1), 3 molecules per monomer), ATP2 (subunit beta, part of F(1), 3 molecules per monomer), ATP3 (subunit gamma, part of the central stalk), ATP4 (subunit b, part of the peripheral stalk), ATP5/OSCP (subunit 5/OSCP, part of the peripheral stalk), ATP6 (subunit a, part of the peripheral stalk), ATP7 (subunit d, part of the peripheral stalk), ATP8 (subunit 8, part of the peripheral stalk), OLI1 (subunit c, part of the rotor, 10 molecules per monomer), ATP14 (subunit h, part of the peripheral stalk), ATP15 (subunit epsilon, part of the central stalk), ATP16 (subunit delta, part of the central stalk), ATP17 (subunit f, part of the peripheral stalk), ATP18 (subunit i/j, part of the peripheral stalk). Dimer-specific subunits are ATP19 (subunit k, at interface between monomers), ATP20 (subunit g, at interface between monomers), TIM11 (subunit e, at interface between monomers). Also contains subunit L.

Its subcellular location is the mitochondrion inner membrane. Functionally, mitochondrial membrane ATP synthase (F(1)F(0) ATP synthase or Complex V) produces ATP from ADP in the presence of a proton gradient across the membrane which is generated by electron transport complexes of the respiratory chain. F-type ATP synthases consist of two structural domains, F(1) - containing the extramembraneous catalytic core, and F(0) - containing the membrane proton channel, linked together by a central stalk and a peripheral stalk. During catalysis, ATP synthesis in the catalytic domain of F(1) is coupled via a rotary mechanism of the central stalk subunits to proton translocation. Part of the complex F(0) domain. Minor subunit located with subunit a/ATP6 in the membrane. The K chain binds the dimeric form by interacting with the G and E chains. The chain is ATP synthase subunit K, mitochondrial from Pichia angusta (Yeast).